Reading from the N-terminus, the 1257-residue chain is Neural cell adhesion molecule L1 (1257 aa).

Residues 1 to 19 (MVVALRYVWPLLLCSPCLL) form the signal peptide. Over 20 to 1120 (IQIPEEYEGH…RLPPAGFATE (1101 aa)) the chain is Extracellular. Ig-like C2-type domains follow at residues 35–125 (PVIT…TAMS), 139–226 (PKET…EPID), 240–328 (PRLL…YYVT), 333–420 (PYWL…AYIY), 425–507 (PAKI…NNVT), and 518–607 (TQIT…AQLL). Disulfide bonds link Cys-57-Cys-114 and Cys-158-Cys-209. N-linked (GlcNAc...) asparagine glycosylation is found at Asn-100, Asn-203, Asn-247, and Asn-294. 2 cysteine pairs are disulfide-bonded: Cys-264–Cys-312 and Cys-354–Cys-404. 4 N-linked (GlcNAc...) asparagine glycosylation sites follow: Asn-433, Asn-479, Asn-490, and Asn-505. An intrachain disulfide couples Cys-448 to Cys-497. Residues Cys-539 and Cys-591 are joined by a disulfide bond. A Cell attachment site motif is present at residues 554–556 (RGD). N-linked (GlcNAc...) asparagine glycosylation is found at Asn-588 and Asn-671. 5 Fibronectin type-III domains span residues 615–712 (VPRL…TPEA), 717–810 (NPVD…SGED), 814–916 (AIPE…TPEG), 920–1015 (HPEA…MALS), and 1016–1115 (GISD…LPPA). The segment at 698-725 (GEPSPVSETVVTPEAAPEKNPVDVKGEG) is disordered. Over residues 713 to 725 (APEKNPVDVKGEG) the composition is skewed to basic and acidic residues. N-linked (GlcNAc...) asparagine glycosylation is found at Asn-726, Asn-777, Asn-825, Asn-849, Asn-876, Asn-979, Asn-1022, Asn-1030, Asn-1071, and Asn-1105. A helical transmembrane segment spans residues 1121–1143 (GWFIGFVSAIILLLLVLLILCFI). Topologically, residues 1144–1257 (KRSKGGKYSV…SPINPAVALE (114 aa)) are cytoplasmic. Phosphoserine occurs at positions 1163, 1172, 1177, and 1178. Positions 1176–1187 (YRSLESDNEEKA) are enriched in basic and acidic residues. 2 disordered regions span residues 1176–1207 (YRSL…SDDS) and 1226–1257 (IGQY…VALE). Ser-1181 bears the Phosphoserine; by CaMK2 mark. A phosphoserine mark is found at Ser-1194, Ser-1243, Ser-1244, and Ser-1248. Polar residues predominate over residues 1241–1250 (NDSSGATSPI).

This sequence belongs to the immunoglobulin superfamily. L1/neurofascin/NgCAM family. In terms of assembly, interacts with SHTN1; the interaction occurs in axonal growth cones. Interacts with isoform 2 of BSG.

It localises to the cell membrane. It is found in the cell projection. The protein localises to the growth cone. The protein resides in the axon. Its subcellular location is the dendrite. Functionally, neural cell adhesion molecule involved in the dynamics of cell adhesion and in the generation of transmembrane signals at tyrosine kinase receptors. During brain development, critical in multiple processes, including neuronal migration, axonal growth and fasciculation, and synaptogenesis. In the mature brain, plays a role in the dynamics of neuronal structure and function, including synaptic plasticity. The chain is Neural cell adhesion molecule L1 (L1CAM) from Homo sapiens (Human).